The chain runs to 1682 residues: Collagen alpha-4(IV) chain (1682 aa).

An N-terminal signal peptide occupies residues 1-32 (MRCFFRWTKSFVTAPWSLIFILFTIQYEYGSG). Residues 31–56 (SGKKYGGPCGGRNCSVCQCFPEKGSR) are 7S domain. An N-linked (GlcNAc...) asparagine glycan is attached at asparagine 43. Disordered regions lie at residues 56 to 255 (RGHP…VQPP) and 379 to 1453 (PGPP…FGPG). The interval 57–1451 (GHPGPLGPQG…TGDPGPKGFG (1395 aa)) is triple-helical region. A Cell attachment site motif is present at residues 86 to 88 (RGD). The segment covering 103 to 116 (PTGVPGFPGVDGVP) has biased composition (low complexity). Asparagine 134 carries N-linked (GlcNAc...) asparagine glycosylation. Short sequence motifs (cell attachment site) lie at residues 137–139 (RGD) and 181–183 (RGD). The segment covering 396–410 (MGPPGPPGVPGPPGF) has biased composition (pro residues). The segment covering 411 to 426 (PGEAGVPGRLDCAPGK) has biased composition (low complexity). A compositionally biased stretch (pro residues) spans 487–500 (PPGPMGPPGPPGPP). Residues 578–601 (DGGDGRPGERGDPGPRGDHKDAAP) are compositionally biased toward basic and acidic residues. Short sequence motifs (cell attachment site) lie at residues 587–589 (RGD) and 593–595 (RGD). Pro residues predominate over residues 609-621 (LPGPPGRTGPEGP). A compositionally biased stretch (low complexity) spans 632–647 (QRGLPGEPGRPGTRGF). A glycan (N-linked (GlcNAc...) asparagine) is linked at asparagine 661. Low complexity predominate over residues 665-682 (PGKPGLPGLDGPPGLKGF). The Cell attachment site signature appears at 716 to 718 (RGD). 2 stretches are compositionally biased toward low complexity: residues 742–758 (PGKD…AFGD) and 857–902 (PAGM…LPGL). Composition is skewed to basic and acidic residues over residues 911-929 (ERGK…EVGE) and 938-950 (DLGE…DRGL). Gly residues predominate over residues 969 to 978 (GPPGDGGFSG). Short sequence motifs (cell attachment site) lie at residues 980–982 (RGD) and 992–994 (RGD). The segment covering 998–1010 (DGLPGLHRGQPGI) has biased composition (low complexity). Over residues 1011–1025 (DGPPGPPGPPGPPGS) the composition is skewed to pro residues. Residues 1034–1044 (FPGFPGDQGDP) show a composition bias toward low complexity. The Cell attachment site signature appears at 1144–1146 (RGD). Pro residues-rich tracts occupy residues 1223 to 1235 (PGPP…PGPA), 1248 to 1272 (DPGP…PPGS), 1289 to 1304 (PGPP…PGCQ), 1340 to 1351 (PGPPGRKGPVGP), and 1435 to 1444 (APGPPGPTGD). The Collagen IV NC1 domain occupies 1457-1682 (GFLLVLHSQT…SRCQVCMKHS (226 aa)). 6 cysteine pairs are disulfide-bonded: cysteine 1472–cysteine 1561, cysteine 1505–cysteine 1558, cysteine 1517–cysteine 1523, cysteine 1580–cysteine 1678, cysteine 1614–cysteine 1675, and cysteine 1626–cysteine 1633.

It belongs to the type IV collagen family. As to quaternary structure, there are six type IV collagen isoforms, alpha 1(IV)-alpha 6(IV), each of which can form a triple helix structure with 2 other chains to generate type IV collagen network. The alpha 3(IV) chain forms a triple helical protomer with alpha 4(IV) and alpha 5(IV); this triple helical structure dimerizes through NC1-NC1 domain interactions such that the alpha 3(IV), alpha 4(IV) and alpha 5(IV) chains of one protomer connect with the alpha 5(IV), alpha 4(IV) and alpha 3(IV) chains of the opposite protomer, respectively. Associates with LAMB2 at the neuromuscular junction and in GBM. Post-translationally, prolines at the third position of the tripeptide repeating unit (G-X-Y) are hydroxylated in some or all of the chains. Type IV collagens contain numerous cysteine residues which are involved in inter- and intramolecular disulfide bonding. 12 of these, located in the NC1 domain, are conserved in all known type IV collagens. In terms of processing, the trimeric structure of the NC1 domains is stabilized by covalent bonds between Lys and Met residues. Expressed in Bruch's membrane, outer plexiform layer, inner nuclear layer, inner plexiform layer, ganglion cell layer, inner limiting membrane and around the blood vessels of the retina (at protein level). Highly expressed in kidney and lung. Detected at lower levels in heart, muscle and skin.

It localises to the secreted. The protein resides in the extracellular space. The protein localises to the extracellular matrix. It is found in the basement membrane. Functionally, type IV collagen is the major structural component of glomerular basement membranes (GBM), forming a 'chicken-wire' meshwork together with laminins, proteoglycans and entactin/nidogen. This Mus musculus (Mouse) protein is Collagen alpha-4(IV) chain.